Consider the following 408-residue polypeptide: Imidazolonepropionase (408 aa).

Residues His-73 and His-75 each contribute to the Fe(3+) site. Residues His-73 and His-75 each coordinate Zn(2+). Arg-82, Tyr-145, and His-178 together coordinate 4-imidazolone-5-propanoate. N-formimidoyl-L-glutamate is bound at residue Tyr-145. His-243 lines the Fe(3+) pocket. His-243 contributes to the Zn(2+) binding site. Gln-246 contributes to the 4-imidazolone-5-propanoate binding site. A Fe(3+)-binding site is contributed by Asp-318. Residue Asp-318 coordinates Zn(2+). N-formimidoyl-L-glutamate contacts are provided by Asn-320 and Gly-322. A 4-imidazolone-5-propanoate-binding site is contributed by Ser-323.

The protein belongs to the metallo-dependent hydrolases superfamily. HutI family. The cofactor is Zn(2+). Fe(3+) is required as a cofactor.

Its subcellular location is the cytoplasm. The catalysed reaction is 4-imidazolone-5-propanoate + H2O = N-formimidoyl-L-glutamate. It participates in amino-acid degradation; L-histidine degradation into L-glutamate; N-formimidoyl-L-glutamate from L-histidine: step 3/3. Its function is as follows. Catalyzes the hydrolytic cleavage of the carbon-nitrogen bond in imidazolone-5-propanoate to yield N-formimidoyl-L-glutamate. It is the third step in the universal histidine degradation pathway. This Shewanella oneidensis (strain ATCC 700550 / JCM 31522 / CIP 106686 / LMG 19005 / NCIMB 14063 / MR-1) protein is Imidazolonepropionase.